Reading from the N-terminus, the 204-residue chain is Recombination protein RecR (204 aa).

The segment at 58-75 (CSICQNVTDRDADPCRIC) adopts a C4-type zinc-finger fold. A Toprim domain is found at 83–181 (SVICVVESPV…MVTKIARGIP (99 aa)).

The protein belongs to the RecR family.

Functionally, may play a role in DNA repair. It seems to be involved in an RecBC-independent recombinational process of DNA repair. It may act with RecF and RecO. In Chlorobium phaeovibrioides (strain DSM 265 / 1930) (Prosthecochloris vibrioformis (strain DSM 265)), this protein is Recombination protein RecR.